The following is a 258-amino-acid chain: Ubiquinone/menaquinone biosynthesis C-methyltransferase UbiE (258 aa).

S-adenosyl-L-methionine-binding positions include Thr-81, Asp-102, and Asn-130 to Ala-131.

The protein belongs to the class I-like SAM-binding methyltransferase superfamily. MenG/UbiE family.

The enzyme catalyses a 2-demethylmenaquinol + S-adenosyl-L-methionine = a menaquinol + S-adenosyl-L-homocysteine + H(+). The catalysed reaction is a 2-methoxy-6-(all-trans-polyprenyl)benzene-1,4-diol + S-adenosyl-L-methionine = a 5-methoxy-2-methyl-3-(all-trans-polyprenyl)benzene-1,4-diol + S-adenosyl-L-homocysteine + H(+). It functions in the pathway quinol/quinone metabolism; menaquinone biosynthesis; menaquinol from 1,4-dihydroxy-2-naphthoate: step 2/2. The protein operates within cofactor biosynthesis; ubiquinone biosynthesis. Methyltransferase required for the conversion of demethylmenaquinol (DMKH2) to menaquinol (MKH2) and the conversion of 2-polyprenyl-6-methoxy-1,4-benzoquinol (DDMQH2) to 2-polyprenyl-3-methyl-6-methoxy-1,4-benzoquinol (DMQH2). The sequence is that of Ubiquinone/menaquinone biosynthesis C-methyltransferase UbiE from Rhizobium meliloti (strain 1021) (Ensifer meliloti).